Reading from the N-terminus, the 65-residue chain is Putative beta-neurotoxin RjAa4 (65 aa).

The LCN-type CS-alpha/beta domain maps to 1–64 (KEGYPMGRDG…VWDSSTNKCG (64 aa)). Disulfide bonds link Cys11/Cys63, Cys15/Cys37, Cys22/Cys44, and Cys26/Cys46.

It belongs to the long (4 C-C) scorpion toxin superfamily. Sodium channel inhibitor family. Beta subfamily. Expressed by the venom gland.

Its subcellular location is the secreted. Its function is as follows. Beta toxins bind voltage-independently at site-4 of sodium channels (Nav) and shift the voltage of activation toward more negative potentials thereby affecting sodium channel activation and promoting spontaneous and repetitive firing. The protein is Putative beta-neurotoxin RjAa4 of Rhopalurus junceus (Caribbean blue scorpion).